Consider the following 149-residue polypeptide: Small ribosomal subunit protein uS19w (149 aa).

The protein belongs to the universal ribosomal protein uS19 family.

It is found in the cytoplasm. This is Small ribosomal subunit protein uS19w (RPS15E) from Arabidopsis thaliana (Mouse-ear cress).